Reading from the N-terminus, the 226-residue chain is Phosphoglycolate phosphatase (226 aa).

Asp-8 serves as the catalytic Nucleophile. Residues Asp-8 and Asp-10 each coordinate Mg(2+). Lys-152 contributes to the substrate binding site. Residues Asp-175 and Asp-179 each coordinate Mg(2+).

Belongs to the archaeal SPP-like hydrolase family. Mg(2+) serves as cofactor.

It catalyses the reaction 2-phosphoglycolate + H2O = glycolate + phosphate. Catalyzes the dephosphorylation of 2-phosphoglycolate. This is Phosphoglycolate phosphatase from Natronomonas pharaonis (strain ATCC 35678 / DSM 2160 / CIP 103997 / JCM 8858 / NBRC 14720 / NCIMB 2260 / Gabara) (Halobacterium pharaonis).